We begin with the raw amino-acid sequence, 300 residues long: NAD kinase (300 aa).

The active-site Proton acceptor is the D75. NAD(+) contacts are provided by residues 75 to 76 (DG), 149 to 150 (ND), R177, D179, 190 to 195 (TAYALS), A214, and Q248.

Belongs to the NAD kinase family. A divalent metal cation is required as a cofactor.

It localises to the cytoplasm. It catalyses the reaction NAD(+) + ATP = ADP + NADP(+) + H(+). Functionally, involved in the regulation of the intracellular balance of NAD and NADP, and is a key enzyme in the biosynthesis of NADP. Catalyzes specifically the phosphorylation on 2'-hydroxyl of the adenosine moiety of NAD to yield NADP. This Burkholderia ambifaria (strain MC40-6) protein is NAD kinase.